The chain runs to 445 residues: uncharacterized protein (445 aa).

This is an uncharacterized protein from Xanthomonas euvesicatoria.